Here is a 161-residue protein sequence, read N- to C-terminus: Protein-export protein SecB (161 aa).

Residues 141 to 161 (KKQQETAGEQPDQPADTITRH) are disordered.

It belongs to the SecB family. Homotetramer, a dimer of dimers. One homotetramer interacts with 1 SecA dimer.

The protein localises to the cytoplasm. In terms of biological role, one of the proteins required for the normal export of preproteins out of the cell cytoplasm. It is a molecular chaperone that binds to a subset of precursor proteins, maintaining them in a translocation-competent state. It also specifically binds to its receptor SecA. This is Protein-export protein SecB from Nitrosomonas europaea (strain ATCC 19718 / CIP 103999 / KCTC 2705 / NBRC 14298).